The chain runs to 483 residues: Glutamate--tRNA ligase (483 aa).

The 'HIGH' region signature appears at 14–24 (PSPTGDPHVGT). Positions 253-257 (KISKR) match the 'KMSKS' region motif. An ATP-binding site is contributed by K256.

Belongs to the class-I aminoacyl-tRNA synthetase family. Glutamate--tRNA ligase type 1 subfamily. Monomer.

It is found in the cytoplasm. It catalyses the reaction tRNA(Glu) + L-glutamate + ATP = L-glutamyl-tRNA(Glu) + AMP + diphosphate. Functionally, catalyzes the attachment of glutamate to tRNA(Glu) in a two-step reaction: glutamate is first activated by ATP to form Glu-AMP and then transferred to the acceptor end of tRNA(Glu). This chain is Glutamate--tRNA ligase, found in Deinococcus radiodurans (strain ATCC 13939 / DSM 20539 / JCM 16871 / CCUG 27074 / LMG 4051 / NBRC 15346 / NCIMB 9279 / VKM B-1422 / R1).